A 344-amino-acid chain; its full sequence is Endoplasmic reticulum junction formation protein lunapark-1 (344 aa).

Over 1 to 39 (MGNLFSRTKSPATELERVVLSIEDFKKRLQTISASNSST) the chain is Cytoplasmic. Residues 40–60 (LYYYYMGVIIILSIAMAHTWL) traverse the membrane as a helical segment. Residues 61–68 (RFDDPTKT) lie on the Lumenal side of the membrane. The chain crosses the membrane as a helical span at residues 69 to 89 (YVACALVFGATVIVLTGRYII). The Cytoplasmic portion of the chain corresponds to 90–344 (NCFFAWRTNR…ADETAVVEKS (255 aa)). The stretch at 116–140 (DLVKETLKFKEAKEILDRYEEKTEA) forms a coiled coil. Disordered regions lie at residues 136 to 155 (EKTE…HQQK) and 171 to 192 (QKRV…IAFD). Over residues 140 to 155 (AGNTPTENSKLIHQQK) the composition is skewed to polar residues. The C4-type; plays a role in ER morphology zinc-finger motif lies at 239-264 (CSICHTHNGMSVPAEYPFISFRCFEC). The disordered stretch occupies residues 275–344 (PHLPITRPPM…ADETAVVEKS (70 aa)). Polar residues predominate over residues 312 to 326 (PNPSTDLTPSASQHG). Residues 327–344 (SDSEPEKNADETAVVEKS) are compositionally biased toward basic and acidic residues.

It belongs to the lunapark family.

The protein resides in the endoplasmic reticulum membrane. Its function is as follows. Plays a role in tubular endoplasmic reticulum network formation and maintenance. May be involved in central nervous system development. Has a presynaptic role in neurotransmission. Likely to operate in synaptogenesis by regulating vesicular transport or localization. Required for correct localization of rab-3 and snb-1. The sequence is that of Endoplasmic reticulum junction formation protein lunapark-1 from Caenorhabditis briggsae.